We begin with the raw amino-acid sequence, 250 residues long: Ubiquinone biosynthesis O-methyltransferase (250 aa).

The S-adenosyl-L-methionine site is built by Arg41, Gly72, Asp93, and Met136.

Belongs to the methyltransferase superfamily. UbiG/COQ3 family.

The enzyme catalyses a 3-demethylubiquinol + S-adenosyl-L-methionine = a ubiquinol + S-adenosyl-L-homocysteine + H(+). It carries out the reaction a 3-(all-trans-polyprenyl)benzene-1,2-diol + S-adenosyl-L-methionine = a 2-methoxy-6-(all-trans-polyprenyl)phenol + S-adenosyl-L-homocysteine + H(+). The protein operates within cofactor biosynthesis; ubiquinone biosynthesis. Functionally, O-methyltransferase that catalyzes the 2 O-methylation steps in the ubiquinone biosynthetic pathway. In Agrobacterium fabrum (strain C58 / ATCC 33970) (Agrobacterium tumefaciens (strain C58)), this protein is Ubiquinone biosynthesis O-methyltransferase.